Here is a 200-residue protein sequence, read N- to C-terminus: Recombination protein RecR (200 aa).

Residues C58–C75 form a C4-type zinc finger. The region spanning S82–P177 is the Toprim domain.

This sequence belongs to the RecR family.

Its function is as follows. May play a role in DNA repair. It seems to be involved in an RecBC-independent recombinational process of DNA repair. It may act with RecF and RecO. The protein is Recombination protein RecR of Chlamydia caviae (strain ATCC VR-813 / DSM 19441 / 03DC25 / GPIC) (Chlamydophila caviae).